The primary structure comprises 139 residues: uncharacterized protein (139 aa).

It localises to the mitochondrion. This is an uncharacterized protein from Marchantia polymorpha (Common liverwort).